A 396-amino-acid chain; its full sequence is ATP-dependent RNA helicase eIF4A (396 aa).

Positions 22–50 (YSFDDLKLKEELLRGIFGYGFVEPSAIQQ) match the Q motif motif. Positions 53 to 223 (ILPIIEGKDV…SKFMKDPVRI (171 aa)) constitute a Helicase ATP-binding domain. An ATP-binding site is contributed by 66-73 (AQSGTGKT). The DEAD box motif lies at 171-174 (DEAD). In terms of domain architecture, Helicase C-terminal spans 234–395 (GIGQYYVNVE…ELPSSISELF (162 aa)).

Belongs to the DEAD box helicase family. eIF4A subfamily. As to quaternary structure, component of the eIF4F complex, which composition varies with external and internal environmental conditions. It is composed of at least eIF4A, eIF4E and eIF4G.

It localises to the cytoplasm. The catalysed reaction is ATP + H2O = ADP + phosphate + H(+). ATP-dependent RNA helicase which is a subunit of the eIF4F complex involved in cap recognition and is required for mRNA binding to ribosome. In the current model of translation initiation, eIF4A unwinds RNA secondary structures in the 5'-UTR of mRNAs which is necessary to allow efficient binding of the small ribosomal subunit, and subsequent scanning for the initiator codon. This chain is ATP-dependent RNA helicase eIF4A (TIF1), found in Kluyveromyces lactis (strain ATCC 8585 / CBS 2359 / DSM 70799 / NBRC 1267 / NRRL Y-1140 / WM37) (Yeast).